A 323-amino-acid chain; its full sequence is tRNA U34 carboxymethyltransferase (323 aa).

Carboxy-S-adenosyl-L-methionine contacts are provided by residues Lys91, Trp105, Lys110, Gly130, 152–154, 181–182, Met196, Tyr200, and Arg315; these read DPT and IE.

Belongs to the class I-like SAM-binding methyltransferase superfamily. CmoB family. Homotetramer.

The enzyme catalyses carboxy-S-adenosyl-L-methionine + 5-hydroxyuridine(34) in tRNA = 5-carboxymethoxyuridine(34) in tRNA + S-adenosyl-L-homocysteine + H(+). Functionally, catalyzes carboxymethyl transfer from carboxy-S-adenosyl-L-methionine (Cx-SAM) to 5-hydroxyuridine (ho5U) to form 5-carboxymethoxyuridine (cmo5U) at position 34 in tRNAs. This Escherichia coli (strain K12 / MC4100 / BW2952) protein is tRNA U34 carboxymethyltransferase.